Here is a 196-residue protein sequence, read N- to C-terminus: Large ribosomal subunit protein bL25 (196 aa).

The protein belongs to the bacterial ribosomal protein bL25 family. CTC subfamily. In terms of assembly, part of the 50S ribosomal subunit; part of the 5S rRNA/L5/L18/L25 subcomplex. Contacts the 5S rRNA. Binds to the 5S rRNA independently of L5 and L18.

Functionally, this is one of the proteins that binds to the 5S RNA in the ribosome where it forms part of the central protuberance. The polypeptide is Large ribosomal subunit protein bL25 (Geotalea daltonii (strain DSM 22248 / JCM 15807 / FRC-32) (Geobacter daltonii)).